The primary structure comprises 356 residues: MSNQAALKLVGKEDGDKQRALEAALAQIDRAFGKGSVMKLGEKGKVEMESISTGSLGLDIALGIGGLPKGRVIEIYGPESSGKTTLALHVVAECQKAGGTAAFVDAEHALDPGYAFKLGVNLDNLLVSQPDNGEQALEITDTLVRSGAVDIVVIDSVAALTPKAEIEGEMGDSLPGLQARLMSQALRKLTASINKANTIVIFINQIRHKIGVMYGSPETTTGGNALKFYASVRLDIRRTGSIKNRDEIVGNNVRVKVVKNKVAPPFREVEFDIMYGEGISKLGEIIDLGVKAGIIDKAGSWFSYNSQRIGQGRDNVREFLKVNKDLAAEIEAAVRKSSQKIEEELLVGGPEDGDDE.

77 to 84 (GPESSGKT) contacts ATP.

It belongs to the RecA family.

It localises to the cytoplasm. In terms of biological role, can catalyze the hydrolysis of ATP in the presence of single-stranded DNA, the ATP-dependent uptake of single-stranded DNA by duplex DNA, and the ATP-dependent hybridization of homologous single-stranded DNAs. It interacts with LexA causing its activation and leading to its autocatalytic cleavage. The polypeptide is Protein RecA (Caulobacter sp. (strain K31)).